The following is a 431-amino-acid chain: Enolase (431 aa).

Position 167 (Gln-167) interacts with (2R)-2-phosphoglycerate. Catalysis depends on Glu-209, which acts as the Proton donor. Mg(2+) is bound by residues Asp-246, Glu-289, and Asp-316. Lys-341, Arg-370, Ser-371, and Lys-392 together coordinate (2R)-2-phosphoglycerate. The Proton acceptor role is filled by Lys-341.

This sequence belongs to the enolase family. As to quaternary structure, component of the RNA degradosome, a multiprotein complex involved in RNA processing and mRNA degradation. The cofactor is Mg(2+).

It localises to the cytoplasm. It is found in the secreted. The protein localises to the cell surface. It catalyses the reaction (2R)-2-phosphoglycerate = phosphoenolpyruvate + H2O. The protein operates within carbohydrate degradation; glycolysis; pyruvate from D-glyceraldehyde 3-phosphate: step 4/5. In terms of biological role, catalyzes the reversible conversion of 2-phosphoglycerate (2-PG) into phosphoenolpyruvate (PEP). It is essential for the degradation of carbohydrates via glycolysis. This chain is Enolase, found in Shewanella denitrificans (strain OS217 / ATCC BAA-1090 / DSM 15013).